The sequence spans 417 residues: MLKREMNIASYDPELWQAMEQEVVRQEEHIELIASENYTSPRVMQAQGSQLTNKYAEGYPGKRYYGGCEYVDVVEQLAIDRAKALFGADYANVQPHSGSQANAAVYMALLQPGDTILGMNLAHGGHLTHGSPVNFSGKLYNVVPYGIDESGKIDYDDIAAQAEKHQPKMIIGGFSAYSGVVDWAKMREIADSIGAYLFVDMAHVAGLIAAGVYPNPVPHAHIVTTTTHKTLAGPRGGLILAKGGDEELYKKLNSSVFPGCQGGPLMHVIAGKAVALKEAMEPEFKAYQHQVADNAKAMVEVFLARGYKVVSGSTENHLFLLDLVDKNITGKDADAALGRANITVNKNSVPNDPKSPFVTSGVRIGTPAITRRGFKQAEARELAGWMCDVLDNINDEVTIEMIKQKVLAICAKYPVYA.

Residues Leu121 and 125–127 (GHL) each bind (6S)-5,6,7,8-tetrahydrofolate. Residue Lys229 is modified to N6-(pyridoxal phosphate)lysine. 355–357 (SPF) provides a ligand contact to (6S)-5,6,7,8-tetrahydrofolate.

Belongs to the SHMT family. In terms of assembly, homodimer. Pyridoxal 5'-phosphate is required as a cofactor.

Its subcellular location is the cytoplasm. It carries out the reaction (6R)-5,10-methylene-5,6,7,8-tetrahydrofolate + glycine + H2O = (6S)-5,6,7,8-tetrahydrofolate + L-serine. It functions in the pathway one-carbon metabolism; tetrahydrofolate interconversion. The protein operates within amino-acid biosynthesis; glycine biosynthesis; glycine from L-serine: step 1/1. Functionally, catalyzes the reversible interconversion of serine and glycine with tetrahydrofolate (THF) serving as the one-carbon carrier. This reaction serves as the major source of one-carbon groups required for the biosynthesis of purines, thymidylate, methionine, and other important biomolecules. Also exhibits THF-independent aldolase activity toward beta-hydroxyamino acids, producing glycine and aldehydes, via a retro-aldol mechanism. This is Serine hydroxymethyltransferase from Photorhabdus laumondii subsp. laumondii (strain DSM 15139 / CIP 105565 / TT01) (Photorhabdus luminescens subsp. laumondii).